The following is a 1033-amino-acid chain: Isoleucine--tRNA ligase 2 (1033 aa).

A 'HIGH' region motif is present at residues Pro47–His57. The short motif at Lys590 to Ser594 is the 'KMSKS' region element. ATP is bound at residue Lys593.

It belongs to the class-I aminoacyl-tRNA synthetase family. IleS type 2 subfamily. Monomer. Zn(2+) is required as a cofactor.

It localises to the cytoplasm. The catalysed reaction is tRNA(Ile) + L-isoleucine + ATP = L-isoleucyl-tRNA(Ile) + AMP + diphosphate. Its function is as follows. Catalyzes the attachment of isoleucine to tRNA(Ile). As IleRS can inadvertently accommodate and process structurally similar amino acids such as valine, to avoid such errors it has two additional distinct tRNA(Ile)-dependent editing activities. One activity is designated as 'pretransfer' editing and involves the hydrolysis of activated Val-AMP. The other activity is designated 'posttransfer' editing and involves deacylation of mischarged Val-tRNA(Ile). This Bacillus thuringiensis subsp. konkukian (strain 97-27) protein is Isoleucine--tRNA ligase 2.